The chain runs to 128 residues: MEQTFVAIKPDGVQRGLCGEVMKFIQPMKHYLDLKDMPFYAGLCKYMSSGPVFAMVWEGEGIVKMMLGETNPADSKPGSIRGDFCINIGRNIIHGSDTVENAKMEVGLWFKPEEFVAYAEKAKAWVYE.

Met-1 carries the N-acetylmethionine modification. Residues Lys-9, Phe-39, Thr-70, Arg-81, and Asn-91 each coordinate ATP. His-94 (pros-phosphohistidine intermediate) is an active-site residue.

Belongs to the NDK family. Requires Mg(2+) as cofactor.

The protein resides in the cytoplasm. Its subcellular location is the nucleus. It is found in the cell projection. It localises to the lamellipodium. The protein localises to the ruffle. The enzyme catalyses a 2'-deoxyribonucleoside 5'-diphosphate + ATP = a 2'-deoxyribonucleoside 5'-triphosphate + ADP. It catalyses the reaction a ribonucleoside 5'-diphosphate + ATP = a ribonucleoside 5'-triphosphate + ADP. Its function is as follows. Major role in the synthesis of nucleoside triphosphates other than ATP. The polypeptide is Nucleoside diphosphate kinase B (nme2) (Merluccius australis australis (Austral hake)).